Reading from the N-terminus, the 483-residue chain is Cobyric acid synthase (483 aa).

Residues 251-438 (SLVVAVPMLP…LHGVFNADEF (188 aa)) form the GATase cobBQ-type domain. The Nucleophile role is filled by cysteine 333. The active site involves histidine 430.

The protein belongs to the CobB/CobQ family. CobQ subfamily.

Its pathway is cofactor biosynthesis; adenosylcobalamin biosynthesis. Catalyzes amidations at positions B, D, E, and G on adenosylcobyrinic A,C-diamide. NH(2) groups are provided by glutamine, and one molecule of ATP is hydrogenolyzed for each amidation. In Brucella anthropi (strain ATCC 49188 / DSM 6882 / CCUG 24695 / JCM 21032 / LMG 3331 / NBRC 15819 / NCTC 12168 / Alc 37) (Ochrobactrum anthropi), this protein is Cobyric acid synthase.